The sequence spans 700 residues: Glycine--tRNA ligase beta subunit (700 aa).

The protein belongs to the class-II aminoacyl-tRNA synthetase family. Tetramer of two alpha and two beta subunits.

The protein resides in the cytoplasm. It carries out the reaction tRNA(Gly) + glycine + ATP = glycyl-tRNA(Gly) + AMP + diphosphate. This is Glycine--tRNA ligase beta subunit from Magnetococcus marinus (strain ATCC BAA-1437 / JCM 17883 / MC-1).